We begin with the raw amino-acid sequence, 326 residues long: 3-oxopimeloyl-[acyl-carrier-protein] synthase (326 aa).

Active-site residues include Cys-115 and His-253. An ACP-binding region spans residues 254–258 (QANIR). Residue Asn-283 is part of the active site.

It belongs to the thiolase-like superfamily. BioZ family.

It carries out the reaction malonyl-[ACP] + an acyl-CoA + H(+) = a 3-oxoacyl-[ACP] + CO2 + CoA. It catalyses the reaction glutaryl-CoA + malonyl-[ACP] + H(+) = 3-oxo-6-carboxyhexanoyl-[ACP] + CO2 + CoA. Its pathway is cofactor biosynthesis; biotin biosynthesis. Its function is as follows. Involved in the formation of the biotin precursor pimeloyl-ACP. Catalyzes the condensation of glutaryl-CoA, an intermediate in lysine degradation, with malonyl-ACP to produce 3-oxopimeloyl-ACP. This Brucella abortus (strain 2308) protein is 3-oxopimeloyl-[acyl-carrier-protein] synthase.